The following is a 528-amino-acid chain: GMP synthase [glutamine-hydrolyzing] (528 aa).

One can recognise a Glutamine amidotransferase type-1 domain in the interval 13–204 (AIVILDFGSQ…VYHICGCEPD (192 aa)). Catalysis depends on cysteine 90, which acts as the Nucleophile. Active-site residues include histidine 178 and glutamate 180. In terms of domain architecture, GMPS ATP-PPase spans 205 to 403 (WTTTAFIEEA…LGLPEEIVRR (199 aa)). 232-238 (SGGVDSS) lines the ATP pocket.

As to quaternary structure, homodimer.

The catalysed reaction is XMP + L-glutamine + ATP + H2O = GMP + L-glutamate + AMP + diphosphate + 2 H(+). Its pathway is purine metabolism; GMP biosynthesis; GMP from XMP (L-Gln route): step 1/1. Functionally, catalyzes the synthesis of GMP from XMP. This is GMP synthase [glutamine-hydrolyzing] from Prochlorococcus marinus (strain MIT 9303).